A 200-amino-acid chain; its full sequence is Probable GTP-binding protein EngB (200 aa).

An EngB-type G domain is found at 23–197; it reads KNSEVVFIGR…RERVLKDVLG (175 aa). GTP-binding positions include 31–38, 58–62, 83–86, 153–156, and 175–177; these read GRSNVGKS, GKTQL, DLPG, TKMD, and FTA. Positions 38 and 60 each coordinate Mg(2+).

Belongs to the TRAFAC class TrmE-Era-EngA-EngB-Septin-like GTPase superfamily. EngB GTPase family. Requires Mg(2+) as cofactor.

Its function is as follows. Necessary for normal cell division and for the maintenance of normal septation. This Wolinella succinogenes (strain ATCC 29543 / DSM 1740 / CCUG 13145 / JCM 31913 / LMG 7466 / NCTC 11488 / FDC 602W) (Vibrio succinogenes) protein is Probable GTP-binding protein EngB.